The primary structure comprises 268 residues: 4-hydroxy-tetrahydrodipicolinate reductase (268 aa).

NAD(+) contacts are provided by residues Gly8 to Met13, Asp34, Gly95 to Thr97, and Ala121 to Phe124. His151 functions as the Proton donor/acceptor in the catalytic mechanism. His152 is a (S)-2,3,4,5-tetrahydrodipicolinate binding site. The Proton donor role is filled by Lys155. Residue Gly161 to Thr162 coordinates (S)-2,3,4,5-tetrahydrodipicolinate.

This sequence belongs to the DapB family.

It localises to the cytoplasm. The enzyme catalyses (S)-2,3,4,5-tetrahydrodipicolinate + NAD(+) + H2O = (2S,4S)-4-hydroxy-2,3,4,5-tetrahydrodipicolinate + NADH + H(+). It carries out the reaction (S)-2,3,4,5-tetrahydrodipicolinate + NADP(+) + H2O = (2S,4S)-4-hydroxy-2,3,4,5-tetrahydrodipicolinate + NADPH + H(+). The protein operates within amino-acid biosynthesis; L-lysine biosynthesis via DAP pathway; (S)-tetrahydrodipicolinate from L-aspartate: step 4/4. In terms of biological role, catalyzes the conversion of 4-hydroxy-tetrahydrodipicolinate (HTPA) to tetrahydrodipicolinate. The protein is 4-hydroxy-tetrahydrodipicolinate reductase of Dictyoglomus turgidum (strain DSM 6724 / Z-1310).